A 427-amino-acid chain; its full sequence is Light-independent protochlorophyllide reductase subunit N (427 aa).

3 residues coordinate [4Fe-4S] cluster: Cys29, Cys54, and Cys115.

Belongs to the BchN/ChlN family. In terms of assembly, protochlorophyllide reductase is composed of three subunits; BchL, BchN and BchB. Forms a heterotetramer of two BchB and two BchN subunits. Requires [4Fe-4S] cluster as cofactor.

The enzyme catalyses chlorophyllide a + oxidized 2[4Fe-4S]-[ferredoxin] + 2 ADP + 2 phosphate = protochlorophyllide a + reduced 2[4Fe-4S]-[ferredoxin] + 2 ATP + 2 H2O. It functions in the pathway porphyrin-containing compound metabolism; bacteriochlorophyll biosynthesis (light-independent). Component of the dark-operative protochlorophyllide reductase (DPOR) that uses Mg-ATP and reduced ferredoxin to reduce ring D of protochlorophyllide (Pchlide) to form chlorophyllide a (Chlide). This reaction is light-independent. The NB-protein (BchN-BchB) is the catalytic component of the complex. The protein is Light-independent protochlorophyllide reductase subunit N of Bradyrhizobium sp. (strain ORS 278).